The following is a 180-amino-acid chain: Lysine-specific demethylase 5C (180 aa).

A disordered region spans residues 116–159 (PEESLAYSSDAGEGAGHIPKVQGLLENGDSVTSPEKVATEEGSG). Ser-148 bears the Phosphoserine mark.

This sequence belongs to the JARID1 histone demethylase family. In terms of assembly, part of two distinct complexes, one containing E2F6, and the other containing REST. Interacts with ZMYND8. Fe(2+) is required as a cofactor.

Its subcellular location is the nucleus. The enzyme catalyses N(6),N(6),N(6)-trimethyl-L-lysyl(4)-[histone H3] + 3 2-oxoglutarate + 3 O2 = L-lysyl(4)-[histone H3] + 3 formaldehyde + 3 succinate + 3 CO2. In terms of biological role, histone demethylase that specifically demethylates 'Lys-4' of histone H3, thereby playing a central role in histone code. Does not demethylate histone H3 'Lys-9', H3 'Lys-27', H3 'Lys-36', H3 'Lys-79' or H4 'Lys-20'. Demethylates trimethylated and dimethylated but not monomethylated H3 'Lys-4'. Participates in transcriptional repression of neuronal genes by recruiting histone deacetylases and REST at neuron-restrictive silencer elements. Represses the CLOCK-BMAL1 heterodimer-mediated transcriptional activation of the core clock component PER2. This is Lysine-specific demethylase 5C (KDM5C) from Cricetulus griseus (Chinese hamster).